The chain runs to 780 residues: Acyl-CoA dehydrogenase family member 11 (780 aa).

An N6-acetyllysine modification is found at K177. A Phosphotyrosine modification is found at Y324. At K391 the chain carries N6-succinyllysine. Residues 504-514 (FCMTEPDVASS) and 538-540 (WSS) contribute to the FAD site. S514 lines the substrate pocket. 629-632 (GPGR) is a binding site for substrate. FAD is bound by residues R657, Q727, and 727–731 (QVCGG). A substrate-binding site is contributed by G755. FAD is bound at residue 756-758 (PDE).

This sequence belongs to the acyl-CoA dehydrogenase family. Homodimer. The cofactor is FAD. Widely expressed with highest levels in brain followed by liver, heart and kidney.

The protein resides in the peroxisome. It localises to the mitochondrion membrane. The catalysed reaction is a 2,3-saturated acyl-CoA + oxidized [electron-transfer flavoprotein] + H(+) = a (2E)-enoyl-CoA + reduced [electron-transfer flavoprotein]. It carries out the reaction docosanoyl-CoA + oxidized [electron-transfer flavoprotein] + H(+) = (2E)-docosenoyl-CoA + reduced [electron-transfer flavoprotein]. The enzyme catalyses tetracosanoyl-CoA + oxidized [electron-transfer flavoprotein] + H(+) = (2E)-tetracosenoyl-CoA + reduced [electron-transfer flavoprotein]. It catalyses the reaction eicosanoyl-CoA + oxidized [electron-transfer flavoprotein] + H(+) = (2E)-eicosenoyl-CoA + reduced [electron-transfer flavoprotein]. The catalysed reaction is hexacosanoyl-CoA + oxidized [electron-transfer flavoprotein] + H(+) = (2E)-hexacosenoyl-CoA + reduced [electron-transfer flavoprotein]. It carries out the reaction tricosanoyl-CoA + oxidized [electron-transfer flavoprotein] + H(+) = (2E)-tricosenoyl-CoA + reduced [electron-transfer flavoprotein]. Its pathway is lipid metabolism; fatty acid beta-oxidation. Acyl-CoA dehydrogenase, that exhibits maximal activity towards saturated C22-CoA. Probably participates in beta-oxydation and energy production but could also play a role in the metabolism of specific fatty acids to control fatty acids composition of cellular lipids in brain. This chain is Acyl-CoA dehydrogenase family member 11 (ACAD11), found in Homo sapiens (Human).